Consider the following 1551-residue polypeptide: Pentafunctional AROM polypeptide (1551 aa).

Residues 1–379 are 3-dehydroquinate synthase; that stretch reads MSIEKVPILG…YQLKAHEVSK (379 aa). Residues 42–44, 80–83, 111–113, and aspartate 116 contribute to the NAD(+) site; these read DTN, ENNK, and GGV. Arginine 127 contacts 7-phospho-2-dehydro-3-deoxy-D-arabino-heptonate. 136-137 contributes to the NAD(+) binding site; that stretch reads TT. 2 residues coordinate 7-phospho-2-dehydro-3-deoxy-D-arabino-heptonate: aspartate 143 and lysine 149. Residue lysine 158 coordinates NAD(+). A 7-phospho-2-dehydro-3-deoxy-D-arabino-heptonate-binding site is contributed by asparagine 159. NAD(+) contacts are provided by residues 176-179 and asparagine 187; that span reads YLES. Glutamate 191 contacts Zn(2+). Residues 191 to 194 and lysine 243 contribute to the 7-phospho-2-dehydro-3-deoxy-D-arabino-heptonate site; that span reads EVVK. The active-site Proton acceptor; for 3-dehydroquinate synthase activity is the glutamate 253. Residues 257-261 and histidine 264 contribute to the 7-phospho-2-dehydro-3-deoxy-D-arabino-heptonate site; that span reads RNLLN. Histidine 264 is a binding site for Zn(2+). The active-site Proton acceptor; for 3-dehydroquinate synthase activity is the histidine 268. Residues histidine 280 and lysine 351 each coordinate 7-phospho-2-dehydro-3-deoxy-D-arabino-heptonate. Histidine 280 contacts Zn(2+). The EPSP synthase stretch occupies residues 392–838; the sequence is VHPFKQPPQE…WDILHSKFNI (447 aa). Residues 858-1048 are shikimate kinase; that stretch reads DKSIIIIGMR…IPSGRSAALS (191 aa). 865–872 lines the ATP pocket; that stretch reads GMRGTGKS. The tract at residues 1049–1258 is 3-dehydroquinase; sequence LTVPDLNAIS…NEDGLLTIKE (210 aa). The active-site Schiff-base intermediate with substrate; for 3-dehydroquinate dehydratase activity is lysine 1194. The interval 1271–1551 is shikimate dehydrogenase; it reads AKKFWVIGSP…DVIHRAVVEE (281 aa).

In the N-terminal section; belongs to the sugar phosphate cyclases superfamily. Dehydroquinate synthase family. The protein in the 2nd section; belongs to the EPSP synthase family. This sequence in the 3rd section; belongs to the shikimate kinase family. It in the 4th section; belongs to the type-I 3-dehydroquinase family. In the C-terminal section; belongs to the shikimate dehydrogenase family. As to quaternary structure, homodimer. The cofactor is Zn(2+).

The protein resides in the cytoplasm. It catalyses the reaction 7-phospho-2-dehydro-3-deoxy-D-arabino-heptonate = 3-dehydroquinate + phosphate. It carries out the reaction 3-dehydroquinate = 3-dehydroshikimate + H2O. The catalysed reaction is shikimate + NADP(+) = 3-dehydroshikimate + NADPH + H(+). The enzyme catalyses shikimate + ATP = 3-phosphoshikimate + ADP + H(+). It catalyses the reaction 3-phosphoshikimate + phosphoenolpyruvate = 5-O-(1-carboxyvinyl)-3-phosphoshikimate + phosphate. The protein operates within metabolic intermediate biosynthesis; chorismate biosynthesis; chorismate from D-erythrose 4-phosphate and phosphoenolpyruvate: step 2/7. Its pathway is metabolic intermediate biosynthesis; chorismate biosynthesis; chorismate from D-erythrose 4-phosphate and phosphoenolpyruvate: step 3/7. It functions in the pathway metabolic intermediate biosynthesis; chorismate biosynthesis; chorismate from D-erythrose 4-phosphate and phosphoenolpyruvate: step 4/7. It participates in metabolic intermediate biosynthesis; chorismate biosynthesis; chorismate from D-erythrose 4-phosphate and phosphoenolpyruvate: step 5/7. The protein operates within metabolic intermediate biosynthesis; chorismate biosynthesis; chorismate from D-erythrose 4-phosphate and phosphoenolpyruvate: step 6/7. In terms of biological role, the AROM polypeptide catalyzes 5 consecutive enzymatic reactions in prechorismate polyaromatic amino acid biosynthesis. In Candida tropicalis (strain ATCC MYA-3404 / T1) (Yeast), this protein is Pentafunctional AROM polypeptide.